The primary structure comprises 396 residues: MKALVFNPFSGAAGDMILGCTLDLGADRKTVKELIEASVNVSVDIREVVKKGIKALDVRINIPEKEQVRTYPELLDVVKAAKLPSSVEASALGIFSKLAEAEASVHGQPDLEKLHFHEVGQSDALADIIGSSAAIHSLNCDSVYCTPINVGSGTIECAHGVMPVPAPATLELLKKGKFYFRGGTEQKELLTPTGAAILAHFAGPLESFPQGRVISIGYGAGDSELSGPNVLQGTLCELDSCLIPDIIEVLETNADDVSGEVLGNLFEELLAMGARDVAILPATMKKGRPAHVIKVIAKPEDTAKLARKIIVETGSLGVRVIPTRHRLMAARRIESVNFEVEGQIYESAVKIARDSEGILLNMSAEFEDCKKIAKQSGIPVKEVMRKAEEAARKLFS.

This sequence belongs to the LarC family.

The protein is Putative nickel insertion protein of Methanosarcina barkeri (strain Fusaro / DSM 804).